A 343-amino-acid chain; its full sequence is 3-dehydroquinate synthase (343 aa).

NAD(+)-binding positions include 86–90 (GALLD), 110–111 (TT), lysine 123, and lysine 132. Zn(2+)-binding residues include glutamate 165, histidine 229, and histidine 243.

The protein belongs to the sugar phosphate cyclases superfamily. Dehydroquinate synthase family. The cofactor is Co(2+). Requires Zn(2+) as cofactor. NAD(+) serves as cofactor.

The protein resides in the cytoplasm. The catalysed reaction is 7-phospho-2-dehydro-3-deoxy-D-arabino-heptonate = 3-dehydroquinate + phosphate. It participates in metabolic intermediate biosynthesis; chorismate biosynthesis; chorismate from D-erythrose 4-phosphate and phosphoenolpyruvate: step 2/7. Catalyzes the conversion of 3-deoxy-D-arabino-heptulosonate 7-phosphate (DAHP) to dehydroquinate (DHQ). The chain is 3-dehydroquinate synthase from Pyrobaculum islandicum (strain DSM 4184 / JCM 9189 / GEO3).